A 644-amino-acid polypeptide reads, in one-letter code: Chaperone protein DnaK (644 aa).

Threonine 199 carries the post-translational modification Phosphothreonine; by autocatalysis. Residues 602–644 (LYAEQSAQQQGSAGATGGEQPKADKAADDGVVDAEFEEVKDDK) form a disordered region. Positions 604–614 (AEQSAQQQGSA) are enriched in low complexity. Residues 631-644 (GVVDAEFEEVKDDK) show a composition bias toward acidic residues.

It belongs to the heat shock protein 70 family.

Acts as a chaperone. The chain is Chaperone protein DnaK from Teredinibacter turnerae (strain ATCC 39867 / T7901).